A 710-amino-acid polypeptide reads, in one-letter code: Solute carrier organic anion transporter family member 3A1 (710 aa).

Met-1 carries the N-acetylmethionine modification. A compositionally biased stretch (gly residues) spans 1–15 (MQGKKPGGSSGGGRS). The tract at residues 1–25 (MQGKKPGGSSGGGRSGELQGDEAQR) is disordered. Over 1-40 (MQGKKPGGSSGGGRSGELQGDEAQRNKKKKKKVSCFSNIK) the chain is Cytoplasmic. Residues 41-60 (IFLVSECALMLAQGTVGAYL) traverse the membrane as a helical segment. Residues 61 to 79 (VSVLTTLERRFNLQSADVG) are Extracellular-facing. A helical transmembrane segment spans residues 80 to 100 (VIASSFEIGNLALILFVSYFG). Over 101–106 (ARGHRP) the chain is Cytoplasmic. The chain crosses the membrane as a helical span at residues 107 to 131 (RLIGCGGIVMALGALLSALPEFLTH). The Extracellular segment spans residues 132–174 (QYKYEAGEIRWGAEGRDVCATNGSSSDEGPDPDLICRNRTATN). N-linked (GlcNAc...) asparagine glycans are attached at residues Asn-153 and Asn-169. A helical membrane pass occupies residues 175-203 (MMYLLLIGAQVLLGIGATPVQPLGVSYID). Over 204-222 (DHVRRKDSSLYIGILFTML) the chain is Cytoplasmic. A helical transmembrane segment spans residues 223 to 243 (VFGPACGFILGSFCTKIYVDA). Residues 244 to 261 (VFIDTSNLDITPDDPRWI) lie on the Extracellular side of the membrane. Residues 262–286 (GAWWGGFLLCGALLFFSSLLMFGFP) form a helical membrane-spanning segment. Over 287-344 (QSLPPHSEPGMESEQAMLPEREYERPKPSNGVLRHPLEPDSSASCFQQLRVIPKVTKH) the chain is Cytoplasmic. The helical transmembrane segment at 345-366 (LLSNPVFTCIVLAACMEIAVVA) threads the bilayer. Topologically, residues 367 to 386 (GFAAFLGKYLEQQFNLTTSS) are extracellular. Asn-381 carries N-linked (GlcNAc...) asparagine glycosylation. A helical transmembrane segment spans residues 387–410 (ANQLLGMTAIPCACLGIFLGGLLV). The Cytoplasmic portion of the chain corresponds to 411–414 (KKLS). The helical transmembrane segment at 415–438 (LSALGAIRMAMLVNLVSTACYVSF) threads the bilayer. Over 439 to 539 (LFLGCDTVPV…PGCQEAFLTF (101 aa)) the chain is Extracellular. Asn-457 carries an N-linked (GlcNAc...) asparagine glycan. Positions 465–513 (LDPYSPCNNNCECQTDSFTPVCGADGITYLSACFAGCNSTNLTGCACLT) constitute a Kazal-like domain. Intrachain disulfides connect Cys-471/Cys-501, Cys-477/Cys-497, and Cys-486/Cys-511. N-linked (GlcNAc...) asparagine glycans are attached at residues Asn-502, Asn-505, and Asn-519. A helical transmembrane segment spans residues 540–562 (LCVMCVCSLIGAMAQTPSVIILI). Topologically, residues 563–571 (RTVSPELKS) are cytoplasmic. The chain crosses the membrane as a helical span at residues 572-597 (YALGVLFLLLRLLGFIPPPLIFGAGI). Topologically, residues 598–630 (DSTCLFWSTFCGEQGACVLYDNVVYRYLYVSIA) are extracellular. A helical membrane pass occupies residues 631-648 (IALKSFAFILYTTTWQCL). Residues 649–705 (RKNYKRYIKNHEGGLSTSEFLASTLTLDNLGRDPVPAHQTHRTKFIYNLEDHEWCEN) lie on the Cytoplasmic side of the membrane.

This sequence belongs to the organo anion transporter (TC 2.A.60) family. Expressed in many brain regions, including frontal cortex, brain stem and cerebellum. Associated with neuronal bodies in a punctated matter. Detected at the arcuate nucleus and the choroid plexus (at protein level). Little expression, if any, in oligodendrocytes. In the cardiovascular system, detected in cardiac muscle cells and endothelial cells of aorta, coronary artery and left ventricular endocardium (at protein level). In the respiratory system, detected in alveolar epithelial cells and in mucosal epithelium of the trachea (at protein level). In the reproductive system, detected in spermatozoa, oocytes, smooth muscle cells of the ovary, epithelium of the glandula uterine, smooth muscle cells of the myometrium and epithelium of the endometrium (at protein level). In the kidney, detected in afferent and efferent arterioles, and the epithelium of distal tubules and collecting tubules (at protein level).

It localises to the basolateral cell membrane. Its subcellular location is the apical cell membrane. The protein localises to the basal cell membrane. It catalyses the reaction L-thyroxine(out) = L-thyroxine(in). It carries out the reaction prostaglandin E1(out) = prostaglandin E1(in). The enzyme catalyses prostaglandin E2(out) = prostaglandin E2(in). The catalysed reaction is prostaglandin F2alpha(out) = prostaglandin F2alpha(in). It catalyses the reaction (5Z,8Z,11Z,14Z)-eicosatetraenoate(out) = (5Z,8Z,11Z,14Z)-eicosatetraenoate(in). It carries out the reaction taurocholate(out) = taurocholate(in). The enzyme catalyses glycocholate(out) = glycocholate(in). The catalysed reaction is estrone 3-sulfate(out) = estrone 3-sulfate(in). It catalyses the reaction argipressin(out) = argipressin(in). Functionally, putative organic anion antiporter with apparent broad substrate specificity. Recognizes various substrates including thyroid hormone L-thyroxine, prostanoids such as prostaglandin E1 and E2, bile acids such as taurocholate, glycolate and glycochenodeoxycholate and peptide hormones such as L-arginine vasopressin, likely operating in a tissue-specific manner. The transport mechanism, its electrogenicity and potential tissue-specific counterions remain to be elucidated. The polypeptide is Solute carrier organic anion transporter family member 3A1 (Slco3a1) (Rattus norvegicus (Rat)).